A 291-amino-acid chain; its full sequence is Elongation factor Ts (291 aa).

The segment at 79 to 82 (TDFV) is involved in Mg(2+) ion dislocation from EF-Tu.

It belongs to the EF-Ts family.

Its subcellular location is the cytoplasm. Its function is as follows. Associates with the EF-Tu.GDP complex and induces the exchange of GDP to GTP. It remains bound to the aminoacyl-tRNA.EF-Tu.GTP complex up to the GTP hydrolysis stage on the ribosome. The polypeptide is Elongation factor Ts (Ruegeria pomeroyi (strain ATCC 700808 / DSM 15171 / DSS-3) (Silicibacter pomeroyi)).